Reading from the N-terminus, the 1500-residue chain is Synaptonemal complex protein 2 (1500 aa).

A phosphoserine mark is found at serine 457 and serine 458. The residue at position 464 (threonine 464) is a Phosphothreonine. Serine 487 is subject to Phosphoserine. Threonine 496 carries the phosphothreonine modification. Serine 500, serine 509, serine 518, and serine 527 each carry phosphoserine. Positions 512–548 (KAVSKTSESGMDYAASPKSRQSDGRKRWNNRANHNKT) are disordered. Residues threonine 608 and threonine 633 each carry the phosphothreonine modification. Residues serine 646, serine 650, and serine 741 each carry the phosphoserine modification. The disordered stretch occupies residues 796–820 (NPSDSMMSTRKLKEPQDGSGFSKKP). Serine 914 carries the phosphoserine modification. Phosphothreonine is present on threonine 916. Disordered stretches follow at residues 940–1010 (LMDY…TSES) and 1029–1084 (KEET…SASV). Residues 948–958 (NTTKYKSRKSR) are compositionally biased toward basic residues. The segment covering 977–989 (MKNDYEVVVDGRT) has biased composition (basic and acidic residues). Positions 990 to 1000 (RLPRRATKTKK) are enriched in basic residues. Residues 1059–1076 (PSEEQKNSSRLREGREDS) show a composition bias toward basic and acidic residues. 9 positions are modified to phosphoserine: serine 1115, serine 1117, serine 1124, serine 1133, serine 1140, serine 1144, serine 1156, serine 1159, and serine 1164. Threonine 1168 carries the post-translational modification Phosphothreonine. A phosphoserine mark is found at serine 1183, serine 1213, and serine 1216. A disordered region spans residues 1208-1234 (YMEPESPESCDNHMQNKREGNHAASPL). A compositionally biased stretch (basic and acidic residues) spans 1217–1228 (CDNHMQNKREGN). Serine 1232, serine 1275, and serine 1277 each carry phosphoserine. Phosphothreonine is present on threonine 1313. A coiled-coil region spans residues 1388–1429 (LLDELEKVEKDSQTLRDLEKELVDIEEKLVQKMRAYHRCERE).

Belongs to the SYCP2 family. In terms of assembly, component of the lateral elements of synaptonemal complexes. Heterodimer with SYCP3. Interacts with SMC1A and SMC3. Interacts with TEX11. Phosphorylated. In terms of tissue distribution, detected in testis and spermatocytes (at protein level).

The protein resides in the nucleus. It is found in the chromosome. In terms of biological role, major component of the axial/lateral elements of synaptonemal complexes (SCS) during meiotic prophase. Plays a role in the assembly of synaptonemal complexes. Required for normal meiotic chromosome synapsis during oocyte and spermatocyte development and for normal male and female fertility. Required for insertion of SYCP3 into synaptonemal complexes. May be involved in the organization of chromatin by temporarily binding to DNA scaffold attachment regions. Requires SYCP3, but not SYCP1, in order to be incorporated into the axial/lateral elements. The sequence is that of Synaptonemal complex protein 2 (Sycp2) from Mus musculus (Mouse).